The primary structure comprises 176 residues: Shikimate kinase (176 aa).

Position 14-19 (G14–S19) interacts with ATP. S18 is a binding site for Mg(2+). Substrate contacts are provided by D36, R60, and G82. R120 serves as a coordination point for ATP. R138 is a substrate binding site.

Belongs to the shikimate kinase family. In terms of assembly, monomer. Mg(2+) serves as cofactor.

The protein localises to the cytoplasm. It catalyses the reaction shikimate + ATP = 3-phosphoshikimate + ADP + H(+). It participates in metabolic intermediate biosynthesis; chorismate biosynthesis; chorismate from D-erythrose 4-phosphate and phosphoenolpyruvate: step 5/7. In terms of biological role, catalyzes the specific phosphorylation of the 3-hydroxyl group of shikimic acid using ATP as a cosubstrate. The sequence is that of Shikimate kinase from Dehalococcoides mccartyi (strain ATCC BAA-2100 / JCM 16839 / KCTC 5957 / BAV1).